Consider the following 336-residue polypeptide: uncharacterized protein (336 aa).

The segment at alanine 162 to aspartate 195 is disordered. Low complexity predominate over residues serine 169–threonine 187.

It belongs to the AHA1 family.

This is an uncharacterized protein from Schizosaccharomyces pombe (strain 972 / ATCC 24843) (Fission yeast).